Consider the following 232-residue polypeptide: Small ribosomal subunit protein uS3 (232 aa).

The 69-residue stretch at 39–107 folds into the KH type-2 domain; that stretch reads IRAFLKKKLY…EVNVNIKEER (69 aa). The segment at 211 to 232 is disordered; it reads GVQPEKTEEEAPKKTRRARRGK. Positions 213-223 are enriched in basic and acidic residues; sequence QPEKTEEEAPK.

This sequence belongs to the universal ribosomal protein uS3 family. As to quaternary structure, part of the 30S ribosomal subunit. Forms a tight complex with proteins S10 and S14.

In terms of biological role, binds the lower part of the 30S subunit head. Binds mRNA in the 70S ribosome, positioning it for translation. In Campylobacter concisus (strain 13826), this protein is Small ribosomal subunit protein uS3.